The primary structure comprises 412 residues: DNA replication and repair protein RecF (412 aa).

Residue 30-37 (GKNGLGKT) participates in ATP binding.

It belongs to the RecF family.

Its subcellular location is the cytoplasm. In terms of biological role, the RecF protein is involved in DNA metabolism; it is required for DNA replication and normal SOS inducibility. RecF binds preferentially to single-stranded, linear DNA. It also seems to bind ATP. This is DNA replication and repair protein RecF from Bifidobacterium longum subsp. infantis (strain ATCC 15697 / DSM 20088 / JCM 1222 / NCTC 11817 / S12).